The following is a 1036-amino-acid chain: Protein CLEC16A (1036 aa).

The FPL domain maps to 51-198 (IRSITEILIW…AVRTITLNVY (148 aa)). 4 disordered regions span residues 375–416 (SLEM…DAEK), 437–458 (GTSV…NSEN), 876–967 (HSSP…PSLL), and 1008–1036 (SQLP…PTEH). Positions 381-392 (HKGKKRMQKRPN) are enriched in basic residues. Low complexity-rich tracts occupy residues 877–891 (SSPS…FASG), 898–923 (STSH…APTT), and 943–954 (NSKPSKNSSARS).

Belongs to the CLEC16A/gop-1 family. Interacts with RNF41/NRDP1. Ubiquitously expressed. Expressed in pancreatic islets.

It is found in the endosome membrane. Its subcellular location is the lysosome membrane. Functionally, regulator of mitophagy through the upstream regulation of the RNF41/NRDP1-PRKN pathway. Mitophagy is a selective form of autophagy necessary for mitochondrial quality control. The RNF41/NRDP1-PRKN pathway regulates autophagosome-lysosome fusion during late mitophagy. May protect RNF41/NRDP1 from proteasomal degradation, RNF41/NRDP1 which regulates proteasomal degradation of PRKN. Plays a key role in beta cells functions by regulating mitophagy/autophagy and mitochondrial health. The polypeptide is Protein CLEC16A (Mus musculus (Mouse)).